The following is a 198-amino-acid chain: Recombination protein RecR (198 aa).

The C4-type zinc finger occupies 58–73 (CSVCGNFTDKDPCAIC). One can recognise a Toprim domain in the interval 81 to 175 (NTICVVEHPK…KVTRIAHGIP (95 aa)).

Belongs to the RecR family.

In terms of biological role, may play a role in DNA repair. It seems to be involved in an RecBC-independent recombinational process of DNA repair. It may act with RecF and RecO. This Clostridium tetani (strain Massachusetts / E88) protein is Recombination protein RecR.